Reading from the N-terminus, the 291-residue chain is 4-hydroxy-tetrahydrodipicolinate synthase (291 aa).

Pyruvate is bound at residue T45. Y133 (proton donor/acceptor) is an active-site residue. Catalysis depends on K161, which acts as the Schiff-base intermediate with substrate. Pyruvate is bound at residue I203.

This sequence belongs to the DapA family. Homotetramer; dimer of dimers.

Its subcellular location is the cytoplasm. It carries out the reaction L-aspartate 4-semialdehyde + pyruvate = (2S,4S)-4-hydroxy-2,3,4,5-tetrahydrodipicolinate + H2O + H(+). Its pathway is amino-acid biosynthesis; L-lysine biosynthesis via DAP pathway; (S)-tetrahydrodipicolinate from L-aspartate: step 3/4. Catalyzes the condensation of (S)-aspartate-beta-semialdehyde [(S)-ASA] and pyruvate to 4-hydroxy-tetrahydrodipicolinate (HTPA). In Saccharophagus degradans (strain 2-40 / ATCC 43961 / DSM 17024), this protein is 4-hydroxy-tetrahydrodipicolinate synthase.